The primary structure comprises 383 residues: Galactokinase (383 aa).

34-37 is a binding site for substrate; it reads EHTD. Position 124 to 130 (124 to 130) interacts with ATP; that stretch reads GAGLSSS. The Mg(2+) site is built by S130 and E162. Residue D174 is the Proton acceptor of the active site. Y223 contributes to the substrate binding site.

The protein belongs to the GHMP kinase family. GalK subfamily.

It is found in the cytoplasm. The catalysed reaction is alpha-D-galactose + ATP = alpha-D-galactose 1-phosphate + ADP + H(+). It functions in the pathway carbohydrate metabolism; galactose metabolism. In terms of biological role, catalyzes the transfer of the gamma-phosphate of ATP to D-galactose to form alpha-D-galactose-1-phosphate (Gal-1-P). In Yersinia pseudotuberculosis serotype IB (strain PB1/+), this protein is Galactokinase.